The primary structure comprises 180 residues: Stathmin-3 (180 aa).

S-palmitoyl cysteine attachment occurs at residues cysteine 22 and cysteine 24. The SLD domain maps to 38–180 (GDMEVKQLDK…NKEQREEMSG (143 aa)). Serine 50, serine 60, serine 65, serine 68, serine 72, serine 73, and serine 81 each carry phosphoserine. The segment at 59-82 (KSPSDLSPESPMLSSPPKKKDTSL) is disordered. A compositionally biased stretch (low complexity) spans 60–74 (SPSDLSPESPMLSSP). Residues 75-179 (PKKKDTSLEE…RNKEQREEMS (105 aa)) are a coiled coil.

Belongs to the stathmin family. Interacts with STAT3. Interacts with CLU (secreted form); this interaction may act as an important modulator during neuronal differentiation. Post-translationally, N-terminal palmitoylation promotes specific anchoring to the cytosolic leaflet of Golgi membranes and subsequent vesicular trafficking along dendrites and axons. Neuronal Stathmins are substrates for palmitoyltransferases ZDHHC3, ZDHHC7 and ZDHHC15. As to expression, neuron specific.

It localises to the golgi apparatus. Its subcellular location is the cell projection. It is found in the growth cone. The protein localises to the axon. The protein resides in the cytoplasm. It localises to the cytosol. Its function is as follows. Exhibits microtubule-destabilizing activity, which is antagonized by STAT3. This chain is Stathmin-3 (STMN3), found in Homo sapiens (Human).